The primary structure comprises 343 residues: Adenosine kinase (343 aa).

D296 is an active-site residue.

Belongs to the carbohydrate kinase PfkB family. The cofactor is Mg(2+).

The enzyme catalyses adenosine + ATP = AMP + ADP + H(+). The protein operates within purine metabolism; AMP biosynthesis via salvage pathway; AMP from adenosine: step 1/1. Its function is as follows. ATP dependent phosphorylation of adenosine and other related nucleoside analogs to monophosphate derivatives. Can also act on the cytokinin isopentenyladenosine to produce isopentenyladenosine monophosphate. The polypeptide is Adenosine kinase (ADK) (Physcomitrium patens (Spreading-leaved earth moss)).